Reading from the N-terminus, the 551-residue chain is L-lactate permease (551 aa).

12 helical membrane-spanning segments follow: residues 13 to 33 (NIWL…FALI), 37 to 57 (LKGY…ALLF), 69 to 89 (VVYG…AAVF), 131 to 151 (GAAG…GLGF), 159 to 179 (LCLI…PILV), 194 to 214 (MVGR…MAIM), 245 to 265 (IGPE…LTLF), 306 to 326 (FLFL…ALFA), 366 to 386 (FDWF…SIVW), 405 to 425 (LALP…SNYS), 438 to 458 (TGSA…FLTG), and 530 to 550 (IFTC…TWMI).

Belongs to the lactate permease family.

It localises to the cell inner membrane. The enzyme catalyses (S)-lactate(in) + H(+)(in) = (S)-lactate(out) + H(+)(out). The catalysed reaction is (R)-lactate(in) + H(+)(in) = (R)-lactate(out) + H(+)(out). It catalyses the reaction glycolate(in) + H(+)(in) = glycolate(out) + H(+)(out). Its function is as follows. Uptake of L-lactate across the membrane. Can also transport D-lactate and glycolate. Seems to be driven by a proton motive force. This is L-lactate permease (lldP) from Salmonella typhi.